We begin with the raw amino-acid sequence, 357 residues long: MFSREEVRASRPTKEMKMIFDVLMTFPYFAVHVPSKNILITPKGTVEIPENYQNYPILAIFYVKYLMKKNPYDLLPSTVNWPEPYVVVNTITKRFQDHKLFANKNADVYVERLQNAIASGIKIPESKKNERLGQPKKTKNVTKEIEETFIDATNARKELDEYFRKLQDGTLTGDLEGGLCKVKTLISCKALFGGHTQELQFMATNVRKVWIGEIVCGMVSNKNAIDDNDLEEEERNASGEQTTTAREESEALDTTSNGLDALNTQINAIETEESFWEAIRALHNELRTSPTQLEECRKAAVFLLGHKKILQTFTKQKDTARALFYINLKECLGTSWNLEYTEASDARKMAIKGELQN.

The disordered stretch occupies residues 226–257 (DDNDLEEEERNASGEQTTTAREESEALDTTSN).

In terms of biological role, plasmid partition require REP1, REP2, and a cis-acting DNA sequence (known as STB). REP1 may act by intercalating in the yeast nuclear matrix and binding STB either directly or via REP2. This is Trans-acting factor B (B) from Zygosaccharomyces bailii.